A 191-amino-acid chain; its full sequence is Protein Ves (191 aa).

It belongs to the Ves family.

This chain is Protein Ves, found in Escherichia coli (strain 55989 / EAEC).